The primary structure comprises 337 residues: Lipoyl synthase (337 aa).

[4Fe-4S] cluster-binding residues include Cys81, Cys86, Cys92, Cys107, Cys111, Cys114, and Ser323. The region spanning 93–312 is the Radical SAM core domain; the sequence is FSHGTATFMI…EEYGNALGFS (220 aa).

This sequence belongs to the radical SAM superfamily. Lipoyl synthase family. [4Fe-4S] cluster serves as cofactor.

The protein localises to the cytoplasm. It carries out the reaction [[Fe-S] cluster scaffold protein carrying a second [4Fe-4S](2+) cluster] + N(6)-octanoyl-L-lysyl-[protein] + 2 oxidized [2Fe-2S]-[ferredoxin] + 2 S-adenosyl-L-methionine + 4 H(+) = [[Fe-S] cluster scaffold protein] + N(6)-[(R)-dihydrolipoyl]-L-lysyl-[protein] + 4 Fe(3+) + 2 hydrogen sulfide + 2 5'-deoxyadenosine + 2 L-methionine + 2 reduced [2Fe-2S]-[ferredoxin]. Its pathway is protein modification; protein lipoylation via endogenous pathway; protein N(6)-(lipoyl)lysine from octanoyl-[acyl-carrier-protein]: step 2/2. Catalyzes the radical-mediated insertion of two sulfur atoms into the C-6 and C-8 positions of the octanoyl moiety bound to the lipoyl domains of lipoate-dependent enzymes, thereby converting the octanoylated domains into lipoylated derivatives. The polypeptide is Lipoyl synthase (Xanthomonas oryzae pv. oryzae (strain MAFF 311018)).